The sequence spans 218 residues: 3,4-dihydroxy-2-butanone 4-phosphate synthase (218 aa).

Residues 38–39, aspartate 43, 151–155, and glutamate 175 contribute to the D-ribulose 5-phosphate site; these read RE and RRGHT. Residue glutamate 39 coordinates Mg(2+). Position 154 (histidine 154) interacts with Mg(2+).

It belongs to the DHBP synthase family. In terms of assembly, homodimer. Requires Mg(2+) as cofactor. Mn(2+) is required as a cofactor.

The catalysed reaction is D-ribulose 5-phosphate = (2S)-2-hydroxy-3-oxobutyl phosphate + formate + H(+). The protein operates within cofactor biosynthesis; riboflavin biosynthesis; 2-hydroxy-3-oxobutyl phosphate from D-ribulose 5-phosphate: step 1/1. Functionally, catalyzes the conversion of D-ribulose 5-phosphate to formate and 3,4-dihydroxy-2-butanone 4-phosphate. This chain is 3,4-dihydroxy-2-butanone 4-phosphate synthase, found in Vibrio atlanticus (strain LGP32) (Vibrio splendidus (strain Mel32)).